An 851-amino-acid chain; its full sequence is Protein translocase subunit SecA (851 aa).

ATP is bound by residues Gln88, 106–110 (GEGKT), and Asp496. Zn(2+)-binding residues include Cys828, Cys830, Cys839, and His840.

It belongs to the SecA family. Monomer and homodimer. Part of the essential Sec protein translocation apparatus which comprises SecA, SecYEG and auxiliary proteins SecDF-YajC and YidC. The cofactor is Zn(2+).

The protein localises to the cell inner membrane. It is found in the cytoplasm. It carries out the reaction ATP + H2O + cellular proteinSide 1 = ADP + phosphate + cellular proteinSide 2.. In terms of biological role, part of the Sec protein translocase complex. Interacts with the SecYEG preprotein conducting channel. Has a central role in coupling the hydrolysis of ATP to the transfer of proteins into and across the cell membrane, serving as an ATP-driven molecular motor driving the stepwise translocation of polypeptide chains across the membrane. The protein is Protein translocase subunit SecA of Helicobacter hepaticus (strain ATCC 51449 / 3B1).